The primary structure comprises 589 residues: O-fucosyltransferase 11 (589 aa).

The segment at 1–37 is disordered; sequence MKSKIHHQPNGSNNGVVSSNDNGCRSESPSPPLSPNR. The segment covering 10-23 has biased composition (low complexity); sequence NGSNNGVVSSNDNG. The helical; Signal-anchor for type II membrane protein transmembrane segment at 68–88 threads the bilayer; that stretch reads MIYASGLLMCVGPFSGLVGWV. N-linked (GlcNAc...) asparagine glycosylation is found at N112, N136, and N239. 332–334 contributes to the substrate binding site; sequence HLR. N-linked (GlcNAc...) asparagine glycans are attached at residues N405, N406, and N564.

The protein belongs to the glycosyltransferase GT106 family.

The protein resides in the membrane. Its pathway is glycan metabolism. This chain is O-fucosyltransferase 11, found in Arabidopsis thaliana (Mouse-ear cress).